The following is a 101-amino-acid chain: Enhancer of yellow 2 transcription factor (101 aa).

The protein belongs to the ENY2 family. Component of the nuclear pore complex (NPC)-associated TREX-2/AMEX complex (anchoring and mRNA export complex), composed of e(y)2, xmas and PCID2. Within the TREX-2/ AMEX complex, interactions with xmas is required for localization to the nuclear periphery. Component of the SAGA transcription coactivator-HAT complexes, at least composed of Ada2b, e(y)2, Pcaf/Gcn5, Taf10 and Nipped-A/Trrap. Within the SAGA complex, e(y)2, Sgf11, and not/nonstop form an additional subcomplex of SAGA called the DUB module (deubiquitination module). Component of the THO complex, composed of at least e(y)2, HPR1, THO2, THOC5, THOC6 and THOC7. Interacts with Taf9. Interacts with su(Hw) (via zinc fingers). Interacts with the nuclear pore complex (NPC). Interaction between the TREX-2/AMEX complex and the ORC complex is required for ORC localization to mRNPs, and consequently mRNA export. Within the TREX-2/AMEX-ORC complex, interacts with Orc6 and (via N-terminus or C-terminus) with Orc3. Interacts with the zinc finger protein CG9890. In terms of tissue distribution, ubiquitous.

The protein resides in the nucleus. Its subcellular location is the nucleoplasm. It localises to the cytoplasm. It is found in the nucleus membrane. Functionally, involved in mRNA export coupled transcription activation by association with both the TREX-2/AMEX and the SAGA complexes. The SAGA complex is a multiprotein complex that activates transcription by remodeling chromatin and mediating histone acetylation and deubiquitination. Within the SAGA complex, participates in a subcomplex that specifically deubiquitinates histone H2B. The SAGA complex is recruited to specific gene promoters by activators, where it is required for transcription. Required for nuclear receptor-mediated transactivation. Involved in transcription elongation by recruiting the THO complex onto nascent mRNA. The TREX-2/AMEX complex functions in docking export-competent ribonucleoprotein particles (mRNPs) to the nuclear entrance of the nuclear pore complex (nuclear basket). TREX-2/AMEX participates in mRNA export and accurate chromatin positioning in the nucleus by tethering genes to the nuclear periphery. Recruited to the su(Hw) insulators via its interaction with su(Hw) and participates in the barrier activity of such insulators. In contrast, it does not participate in the enhancer-blocking activity of the su(Hw) insulators. The polypeptide is Enhancer of yellow 2 transcription factor (Drosophila melanogaster (Fruit fly)).